The chain runs to 490 residues: GTPase Der (490 aa).

2 consecutive EngA-type G domains span residues 3–166 and 203–376; these read PVVA…MEDL and IKLA…DSST. GTP contacts are provided by residues 9–16, 56–60, 118–121, 209–216, 256–260, and 321–324; these read GRPNVGKS, DTGGI, NKID, DTAGV, and NKWD. One can recognise a KH-like domain in the interval 377–461; the sequence is RRVGTSMLTR…PIRIQFKEGE (85 aa).

It belongs to the TRAFAC class TrmE-Era-EngA-EngB-Septin-like GTPase superfamily. EngA (Der) GTPase family. Associates with the 50S ribosomal subunit.

Functionally, GTPase that plays an essential role in the late steps of ribosome biogenesis. The protein is GTPase Der of Shigella boydii serotype 18 (strain CDC 3083-94 / BS512).